Reading from the N-terminus, the 83-residue chain is Alpha-conotoxin QcIA (83 aa).

Positions 1–21 are cleaved as a signal peptide; sequence MGMRMMFTLFLLAVLSTTVVS. Residues 22-48 constitute a propeptide that is removed on maturation; it reads FTLDRASNGRDAAADSKAADQIAQTVR. Intrachain disulfides connect Cys-51/Cys-57 and Cys-52/Cys-65. The segment at 53–55 is ser-Xaa-Pro motif, crucial for potent interaction with nAChR; sequence SNP. A propeptide spanning residues 66–83 is cleaved from the precursor; that stretch reads RRTLMLQNPLNHDMSPSA.

It belongs to the conotoxin A superfamily. Expressed by the venom duct.

It localises to the secreted. In terms of biological role, alpha-conotoxins bind to the nicotinic acetylcholine receptors (nAChR) and inhibit them. A synthetic amidated version of this toxin potently and preferentially antagonizes neuronal rat alpha-3-beta-2 (IC(50)=55.7 nM) and alpha-6/alpha-3-beta-4 (IC(50)=90.69 nM) nAChRs. In Conus quercinus (Oak cone), this protein is Alpha-conotoxin QcIA.